Here is an 84-residue protein sequence, read N- to C-terminus: Small ribosomal subunit protein uS17 (84 aa).

The protein belongs to the universal ribosomal protein uS17 family. In terms of assembly, part of the 30S ribosomal subunit.

Its function is as follows. One of the primary rRNA binding proteins, it binds specifically to the 5'-end of 16S ribosomal RNA. This is Small ribosomal subunit protein uS17 from Vibrio atlanticus (strain LGP32) (Vibrio splendidus (strain Mel32)).